The sequence spans 360 residues: Putative mRNA-decapping protein (360 aa).

A CCHC-type zinc finger spans residues 11 to 28 (HICSNCGRSGHEFRNCIE). A Nudix hydrolase domain is found at 163–347 (YKYDNILYHF…KKRILTRVYL (185 aa)). Residues 242 to 264 (GRRDKRSEENMVCACREFEEETG) carry the Nudix box motif. Position 249 (glutamate 249) interacts with Mg(2+). Glutamate 258 acts as the Nucleophile in catalysis. Glutamate 262 serves as a coordination point for Mg(2+).

It belongs to the Nudix hydrolase family. DIPP subfamily. Mg(2+) is required as a cofactor. The cofactor is Mn(2+).

The catalysed reaction is diphospho-myo-inositol polyphosphate + H2O = myo-inositol polyphosphate + phosphate.. Functionally, might function as a decapping enzyme required for the removal of the 5'-end m7GpppN cap tethered to viral and host mRNAs to allow their decay in cells. In addition to the mRNA cap, probably also efficiently hydrolyzes diphosphoinositol polyphosphates. In Acanthamoeba polyphaga (Amoeba), this protein is Putative mRNA-decapping protein.